A 178-amino-acid chain; its full sequence is Large ribosomal subunit protein uL10 (178 aa).

The protein belongs to the universal ribosomal protein uL10 family. As to quaternary structure, part of the ribosomal stalk of the 50S ribosomal subunit. The N-terminus interacts with L11 and the large rRNA to form the base of the stalk. The C-terminus forms an elongated spine to which L12 dimers bind in a sequential fashion forming a multimeric L10(L12)X complex.

Functionally, forms part of the ribosomal stalk, playing a central role in the interaction of the ribosome with GTP-bound translation factors. This Dictyoglomus thermophilum (strain ATCC 35947 / DSM 3960 / H-6-12) protein is Large ribosomal subunit protein uL10.